Consider the following 66-residue polypeptide: MKPSEIREMSIEEIDEKIRQLRLELAKERGMLTMGTSTENPMVIRNLRRDIARLLTIKKEKLREKR.

Belongs to the universal ribosomal protein uL29 family.

This Thermococcus gammatolerans (strain DSM 15229 / JCM 11827 / EJ3) protein is Large ribosomal subunit protein uL29.